A 187-amino-acid polypeptide reads, in one-letter code: ATP synthase subunit b 2 (187 aa).

A disordered region spans residues 1-25 (MAESHGGAKGPAAGAHTGAEGGHGG). The chain crosses the membrane as a helical span at residues 39 to 59 (LVSLAIFFVVLYVIVSKLALP). The interval 103 to 122 (RAQAIGNESRDKANAQAETE) is disordered. A compositionally biased stretch (basic and acidic residues) spans 110–122 (ESRDKANAQAETE).

It belongs to the ATPase B chain family. In terms of assembly, F-type ATPases have 2 components, F(1) - the catalytic core - and F(0) - the membrane proton channel. F(1) has five subunits: alpha(3), beta(3), gamma(1), delta(1), epsilon(1). F(0) has three main subunits: a(1), b(2) and c(10-14). The alpha and beta chains form an alternating ring which encloses part of the gamma chain. F(1) is attached to F(0) by a central stalk formed by the gamma and epsilon chains, while a peripheral stalk is formed by the delta and b chains.

It localises to the cell inner membrane. Functionally, f(1)F(0) ATP synthase produces ATP from ADP in the presence of a proton or sodium gradient. F-type ATPases consist of two structural domains, F(1) containing the extramembraneous catalytic core and F(0) containing the membrane proton channel, linked together by a central stalk and a peripheral stalk. During catalysis, ATP synthesis in the catalytic domain of F(1) is coupled via a rotary mechanism of the central stalk subunits to proton translocation. In terms of biological role, component of the F(0) channel, it forms part of the peripheral stalk, linking F(1) to F(0). The b'-subunit is a diverged and duplicated form of b found in plants and photosynthetic bacteria. The protein is ATP synthase subunit b 2 (atpF2) of Bradyrhizobium diazoefficiens (strain JCM 10833 / BCRC 13528 / IAM 13628 / NBRC 14792 / USDA 110).